The sequence spans 616 residues: Dihydroxy-acid dehydratase (616 aa).

Position 81 (D81) interacts with Mg(2+). C122 serves as a coordination point for [2Fe-2S] cluster. Residues D123 and K124 each contribute to the Mg(2+) site. K124 bears the N6-carboxylysine mark. A [2Fe-2S] cluster-binding site is contributed by C195. E491 serves as a coordination point for Mg(2+). S517 serves as the catalytic Proton acceptor.

The protein belongs to the IlvD/Edd family. Homodimer. Requires [2Fe-2S] cluster as cofactor. Mg(2+) is required as a cofactor.

The enzyme catalyses (2R)-2,3-dihydroxy-3-methylbutanoate = 3-methyl-2-oxobutanoate + H2O. The catalysed reaction is (2R,3R)-2,3-dihydroxy-3-methylpentanoate = (S)-3-methyl-2-oxopentanoate + H2O. The protein operates within amino-acid biosynthesis; L-isoleucine biosynthesis; L-isoleucine from 2-oxobutanoate: step 3/4. It participates in amino-acid biosynthesis; L-valine biosynthesis; L-valine from pyruvate: step 3/4. Its function is as follows. Functions in the biosynthesis of branched-chain amino acids. Catalyzes the dehydration of (2R,3R)-2,3-dihydroxy-3-methylpentanoate (2,3-dihydroxy-3-methylvalerate) into 2-oxo-3-methylpentanoate (2-oxo-3-methylvalerate) and of (2R)-2,3-dihydroxy-3-methylbutanoate (2,3-dihydroxyisovalerate) into 2-oxo-3-methylbutanoate (2-oxoisovalerate), the penultimate precursor to L-isoleucine and L-valine, respectively. In Yersinia pseudotuberculosis serotype O:1b (strain IP 31758), this protein is Dihydroxy-acid dehydratase.